A 31-amino-acid polypeptide reads, in one-letter code: Cytochrome b6-f complex subunit 6 (31 aa).

Residues 3-23 (ILISYFCFLLVFFLFTLILFI) form a helical membrane-spanning segment.

It belongs to the PetL family. As to quaternary structure, the 4 large subunits of the cytochrome b6-f complex are cytochrome b6, subunit IV (17 kDa polypeptide, PetD), cytochrome f and the Rieske protein, while the 4 small subunits are PetG, PetL, PetM and PetN. The complex functions as a dimer.

The protein resides in the plastid. Its subcellular location is the chloroplast thylakoid membrane. In terms of biological role, component of the cytochrome b6-f complex, which mediates electron transfer between photosystem II (PSII) and photosystem I (PSI), cyclic electron flow around PSI, and state transitions. PetL is important for photoautotrophic growth as well as for electron transfer efficiency and stability of the cytochrome b6-f complex. The sequence is that of Cytochrome b6-f complex subunit 6 from Welwitschia mirabilis (Tree tumbo).